The sequence spans 105 residues: UPF0145 protein Mevan_1624 (105 aa).

The protein belongs to the UPF0145 family.

The polypeptide is UPF0145 protein Mevan_1624 (Methanococcus vannielii (strain ATCC 35089 / DSM 1224 / JCM 13029 / OCM 148 / SB)).